The following is a 500-amino-acid chain: 4-aminobutyrate aminotransferase, mitochondrial (500 aa).

The N-terminal 28 residues, 1–28, are a transit peptide targeting the mitochondrion; the sequence is MAFLLITRRLACSSQKNLHLFIPGSRYI. C163 lines the [2Fe-2S] cluster pocket. Residue 164-165 participates in pyridoxal 5'-phosphate binding; sequence GS. C166 contributes to the [2Fe-2S] cluster binding site. R220 contributes to the substrate binding site. K231 carries the post-translational modification N6-succinyllysine. At K252 the chain carries N6-acetyllysine; alternate. K252 carries the N6-succinyllysine; alternate modification. N6-acetyllysine occurs at positions 279 and 318. At K357 the chain carries N6-(pyridoxal phosphate)lysine. Position 381 (T381) interacts with pyridoxal 5'-phosphate. K413 carries the N6-acetyllysine; alternate modification. K413 bears the N6-succinyllysine; alternate mark. N6-acetyllysine occurs at positions 452 and 470.

The protein belongs to the class-III pyridoxal-phosphate-dependent aminotransferase family. In terms of assembly, homodimer; disulfide-linked. The cofactor is pyridoxal 5'-phosphate. It depends on [2Fe-2S] cluster as a cofactor.

It localises to the mitochondrion matrix. It carries out the reaction 4-aminobutanoate + 2-oxoglutarate = succinate semialdehyde + L-glutamate. The catalysed reaction is (S)-3-amino-2-methylpropanoate + 2-oxoglutarate = 2-methyl-3-oxopropanoate + L-glutamate. Its function is as follows. Catalyzes the conversion of gamma-aminobutyrate and L-beta-aminoisobutyrate to succinate semialdehyde and methylmalonate semialdehyde, respectively. Can also convert delta-aminovalerate and beta-alanine. The sequence is that of 4-aminobutyrate aminotransferase, mitochondrial from Mus musculus (Mouse).